The primary structure comprises 504 residues: UDP-glycosyltransferase UGT4 (504 aa).

The N-terminal stretch at 1–23 (MTLLRDLLLLYINSLLFINPSIG) is a signal peptide. Topologically, residues 24 to 474 (ENILVFLPTK…SAVIDLYWFQ (451 aa)) are lumenal. Asparagine 54, asparagine 66, asparagine 69, and asparagine 422 each carry an N-linked (GlcNAc...) asparagine glycan. Residues 475 to 495 (YILLDIILFYSLIVLILLCIL) form a helical membrane-spanning segment. Topologically, residues 496 to 504 (RIFFRMLTK) are cytoplasmic.

This sequence belongs to the UDP-glycosyltransferase family.

It localises to the microsome membrane. Its function is as follows. Catalyzes the transfer of a glycosyl group from a UDP-sugar to an acceptor molecule. The protein is UDP-glycosyltransferase UGT4 of Dactylopius coccus (Cochineal).